A 249-amino-acid chain; its full sequence is Triosephosphate isomerase (249 aa).

9-11 (NWK) lines the substrate pocket. H94 acts as the Electrophile in catalysis. Catalysis depends on E166, which acts as the Proton acceptor. Substrate-binding positions include G172, S211, and 232-233 (GG).

This sequence belongs to the triosephosphate isomerase family. In terms of assembly, homodimer.

It localises to the cytoplasm. The enzyme catalyses D-glyceraldehyde 3-phosphate = dihydroxyacetone phosphate. Its pathway is carbohydrate biosynthesis; gluconeogenesis. It functions in the pathway carbohydrate degradation; glycolysis; D-glyceraldehyde 3-phosphate from glycerone phosphate: step 1/1. Functionally, involved in the gluconeogenesis. Catalyzes stereospecifically the conversion of dihydroxyacetone phosphate (DHAP) to D-glyceraldehyde-3-phosphate (G3P). The polypeptide is Triosephosphate isomerase (Dechloromonas aromatica (strain RCB)).